Reading from the N-terminus, the 331-residue chain is Syntaxin-43 (331 aa).

The Cytoplasmic segment spans residues Met1–Gly305. 2 disordered regions span residues Val20–Leu45 and Pro59–Thr80. A compositionally biased stretch (polar residues) spans Thr31 to Gly40. The stretch at Lys124–Ala154 forms a coiled coil. One can recognise a t-SNARE coiled-coil homology domain in the interval Glu235–Ala297. The chain crosses the membrane as a helical; Anchor for type IV membrane protein span at residues Met306–Leu326. The Vesicular portion of the chain corresponds to Lys327–Leu331.

It belongs to the syntaxin family. As to quaternary structure, part of the t-SNARE complex. As to expression, expressed at low levels in roots, stems, flowers and leaves.

It localises to the golgi apparatus. Its subcellular location is the trans-Golgi network membrane. Its function is as follows. Contributes to the regulation of secretory and vacuolar transport pathways in the post-Golgi network, and to the maintenance of the Golgi apparatus and trans-Golgi network (TGN) morphologies. Vesicle trafficking protein that functions in the secretory pathway and mediates liposome fusion. Required for extracellular resistance responses to a fungal pathogen. Also involved in the protection of chloroplasts from salicylic acid-dependent biotic stress. This is Syntaxin-43 from Arabidopsis thaliana (Mouse-ear cress).